The sequence spans 165 residues: Large ribosomal subunit protein uL10 (165 aa).

It belongs to the universal ribosomal protein uL10 family. As to quaternary structure, part of the ribosomal stalk of the 50S ribosomal subunit. The N-terminus interacts with L11 and the large rRNA to form the base of the stalk. The C-terminus forms an elongated spine to which L12 dimers bind in a sequential fashion forming a multimeric L10(L12)X complex.

In terms of biological role, forms part of the ribosomal stalk, playing a central role in the interaction of the ribosome with GTP-bound translation factors. This is Large ribosomal subunit protein uL10 from Burkholderia lata (strain ATCC 17760 / DSM 23089 / LMG 22485 / NCIMB 9086 / R18194 / 383).